The sequence spans 135 residues: Interleukin-4 (135 aa).

A signal peptide spans Met-1–Gly-24. Disulfide bonds link Cys-27–Cys-135, Cys-48–Cys-85, and Cys-70–Cys-105. Asn-62 carries an N-linked (GlcNAc...) asparagine glycan.

It belongs to the IL-4/IL-13 family.

It localises to the secreted. In terms of biological role, participates in at least several B-cell activation processes as well as of other cell types. It is a costimulator of DNA-synthesis. It induces the expression of class II MHC molecules on resting B-cells. It enhances both secretion and cell surface expression of IgE and IgG1. It also regulates the expression of the low affinity Fc receptor for IgE (CD23) on both lymphocytes and monocytes. Positively regulates IL31RA expression in macrophages. Stimulates autophagy in dendritic cells by interfering with mTORC1 signaling and through the induction of RUFY4. This Bubalus carabanensis (Swamp type water buffalo) protein is Interleukin-4 (IL4).